A 256-amino-acid polypeptide reads, in one-letter code: uncharacterized protein (256 aa).

The first 24 residues, 1–24 (MIKRVNKLVLGISFLFLIISIFAG), serve as a signal peptide directing secretion. Cys25 is lipidated: N-palmitoyl cysteine. Cys25 is lipidated: S-diacylglycerol cysteine.

It belongs to the staphylococcal tandem lipoprotein family.

Its subcellular location is the cell membrane. This is an uncharacterized protein from Staphylococcus aureus (strain Mu50 / ATCC 700699).